The primary structure comprises 324 residues: UDP-N-acetylenolpyruvoylglucosamine reductase (324 aa).

Positions 36-203 constitute an FAD-binding PCMH-type domain; the sequence is FRAGGLAELM…TSVLFEGYPE (168 aa). The active site involves arginine 183. Serine 232 acts as the Proton donor in catalysis. The active site involves glutamate 302.

This sequence belongs to the MurB family. FAD serves as cofactor.

It localises to the cytoplasm. The enzyme catalyses UDP-N-acetyl-alpha-D-muramate + NADP(+) = UDP-N-acetyl-3-O-(1-carboxyvinyl)-alpha-D-glucosamine + NADPH + H(+). It participates in cell wall biogenesis; peptidoglycan biosynthesis. In terms of biological role, cell wall formation. This chain is UDP-N-acetylenolpyruvoylglucosamine reductase, found in Rhizobium etli (strain CIAT 652).